The following is a 191-amino-acid chain: Inosine triphosphate pyrophosphatase (191 aa).

Position 12–17 (12–17 (TGNANK)) interacts with ITP. Glu-42 contacts Mg(2+). ITP contacts are provided by residues Lys-54, 70–71 (DT), Lys-87, 145–148 (FGWD), Lys-168, and 173–174 (HR).

It belongs to the HAM1 NTPase family. Homodimer. The cofactor is Mg(2+). Mn(2+) is required as a cofactor.

The protein resides in the cytoplasm. The catalysed reaction is ITP + H2O = IMP + diphosphate + H(+). It carries out the reaction dITP + H2O = dIMP + diphosphate + H(+). The enzyme catalyses XTP + H2O = XMP + diphosphate + H(+). In terms of biological role, pyrophosphatase that hydrolyzes non-canonical purine nucleotides such as inosine triphosphate (ITP), deoxyinosine triphosphate (dITP) or xanthosine 5'-triphosphate (XTP) to their respective monophosphate derivatives. The enzyme does not distinguish between the deoxy- and ribose forms. Probably excludes non-canonical purines from RNA and DNA precursor pools, thus preventing their incorporation into RNA and DNA and avoiding chromosomal lesions. The sequence is that of Inosine triphosphate pyrophosphatase from Phytophthora infestans (strain T30-4) (Potato late blight agent).